The primary structure comprises 702 residues: Methionine--tRNA ligase (702 aa).

The short motif at 14–24 (PYANGPVHLGH) is the 'HIGH' region element. Zn(2+) contacts are provided by C146, C149, C159, and C162. The short motif at 344–348 (KFSKS) is the 'KMSKS' region element. K347 is a binding site for ATP. A tRNA-binding domain is found at 601-702 (DFLKVDLRVA…GDEINGQQIQ (102 aa)).

Belongs to the class-I aminoacyl-tRNA synthetase family. MetG type 1 subfamily. As to quaternary structure, homodimer. It depends on Zn(2+) as a cofactor.

Its subcellular location is the cytoplasm. The enzyme catalyses tRNA(Met) + L-methionine + ATP = L-methionyl-tRNA(Met) + AMP + diphosphate. Its function is as follows. Is required not only for elongation of protein synthesis but also for the initiation of all mRNA translation through initiator tRNA(fMet) aminoacylation. This is Methionine--tRNA ligase from Chlorobium limicola (strain DSM 245 / NBRC 103803 / 6330).